The primary structure comprises 487 residues: Ribulose bisphosphate carboxylase large chain (487 aa).

Positions 127 and 177 each coordinate substrate. K179 serves as the catalytic Proton acceptor. K181 provides a ligand contact to substrate. The Mg(2+) site is built by K205, D207, and E208. K205 is modified (N6-carboxylysine). The active-site Proton acceptor is the H297. Substrate is bound by residues R298, H330, and S382.

The protein belongs to the RuBisCO large chain family. Type I subfamily. In terms of assembly, heterohexadecamer of 8 large chains and 8 small chains. Requires Mg(2+) as cofactor.

The catalysed reaction is 2 (2R)-3-phosphoglycerate + 2 H(+) = D-ribulose 1,5-bisphosphate + CO2 + H2O. It carries out the reaction D-ribulose 1,5-bisphosphate + O2 = 2-phosphoglycolate + (2R)-3-phosphoglycerate + 2 H(+). Functionally, ruBisCO catalyzes two reactions: the carboxylation of D-ribulose 1,5-bisphosphate, the primary event in carbon dioxide fixation, as well as the oxidative fragmentation of the pentose substrate. Both reactions occur simultaneously and in competition at the same active site. This Paracoccus denitrificans (strain Pd 1222) protein is Ribulose bisphosphate carboxylase large chain.